A 495-amino-acid chain; its full sequence is Neuronal acetylcholine receptor subunit alpha-3 (495 aa).

The first 21 residues, 1 to 21 (MARRSRLRRLLLLLLLPVAST), serve as a signal peptide directing secretion. Residues 22-240 (SDAEHRLFER…PLFYTINLII (219 aa)) are Extracellular-facing. N45 and N162 each carry an N-linked (GlcNAc...) asparagine glycan. 2 disulfide bridges follow: C149–C163 and C213–C214. The helical transmembrane segment at 241-256 (PCLLISFLTVLVFYLP) threads the bilayer. Topologically, residues 257–258 (SD) are cytoplasmic. The chain crosses the membrane as a helical span at residues 259–275 (CGEKVTLCISVLLSLTV). Position 261 (E261) interacts with Na(+). The Extracellular segment spans residues 276-297 (FLLVITETIPSTSLVIPLIGEY). A helical transmembrane segment spans residues 298–316 (LLFTMIFVTLSIVITVFVL). Over 317–464 (NVHYRTPTTH…QDDWKYVAMV (148 aa)) the chain is Cytoplasmic. A phosphoserine mark is found at S403 and S406. Residues 465–483 (IDRIFLWVFILVCILGTAG) form a helical membrane-spanning segment. Residues 484-495 (LFLQPLMTRDDA) lie on the Extracellular side of the membrane.

This sequence belongs to the ligand-gated ion channel (TC 1.A.9) family. Acetylcholine receptor (TC 1.A.9.1) subfamily. Alpha-3/CHRNA3 sub-subfamily. In terms of assembly, neuronal AChR is composed of two different types of subunits: alpha and beta. CHRNA3/Alpha-3 subunit can be combined to CHRNB2/beta-2 or CHRNB4/beta-4 to give rise to functional receptors. Part of a complex composed of STUB1/CHIP, VCP/p97, CHRNA3, and UBXN2A that modulates the ubiquitination and endoplasmic reticulum-associated degradation (ERAD) of CHRNA3. Within the complex UBXN2A acts as a scaffold protein required for the interaction of CHRNA3 with VCP/p97, this interaction also inhibits CHRNA3 ubiquitination by STUB1/CHIP and subsequently ERAD. Interacts with UBXN2A (via SEP domain), the interaction is required for the interaction of CHRNA3 in the STUB1:VCP:UBXN2A complex. Interacts with RIC3; which is required for proper folding and assembly. Interacts with LYPD6. In terms of processing, ubiquitinated; by STUB1/CHIP and thereafter degraded by the 26S proteosome complex.

It localises to the synaptic cell membrane. Its subcellular location is the cell membrane. The protein resides in the endoplasmic reticulum. The protein localises to the golgi apparatus. It catalyses the reaction K(+)(in) = K(+)(out). It carries out the reaction Na(+)(in) = Na(+)(out). The catalysed reaction is Ca(2+)(in) = Ca(2+)(out). With respect to regulation, activated by a myriad of ligands such as acetylcholine, cytisine, nicotine, choline and epibatidine. The heteropentamer CHRNA3:CHRNB2 activity is blocked by alpha-conotoxins ImI, ImII, PnIA, GID and MII. The heteropentamer CHRNA3:CHRNB4 activity is blocked by the alpha-conotoxin ImI and AuIB. Functionally, component of neuronal acetylcholine receptors (nAChRs) that function as pentameric, ligand-gated cation channels with high calcium permeability among other activities. nAChRs are excitatory neurotrasnmitter receptors formed by a collection of nAChR subunits known to mediate synaptic transmission in the nervous system and the neuromuscular junction. Each nAchR subunit confers differential attributes to channel properties, including activation, deactivation and desensitization kinetics, pH sensitivity, cation permeability, and binding to allosteric modulators. CHRNA3 forms heteropentameric neuronal acetylcholine receptors with CHRNB2 and CHRNB4. CHRNA3:CHRNB4 being predominant in neurons of the autonomic ganglia, it is known as ganglionic nicotinic receptor. CHRNA3:CHRNB4 also plays an important role in the habenulo-interpeduncular tract, modulating the mesolimbic dopamine system and affecting reward circuits and addiction. Hypothalamic CHRNA3:CHRNB4 nAChR activation by nicotine leads to activation of POMC neurons and a decrease in food intake. Also expressed in the urothelium where it modulates reflex bladder activity by increasing intracellular calcium through extracellular influx and basal ATP release. This is Neuronal acetylcholine receptor subunit alpha-3 (CHRNA3) from Bos taurus (Bovine).